A 151-amino-acid polypeptide reads, in one-letter code: Putative pre-16S rRNA nuclease (151 aa).

It belongs to the YqgF nuclease family.

The protein resides in the cytoplasm. Its function is as follows. Could be a nuclease involved in processing of the 5'-end of pre-16S rRNA. This chain is Putative pre-16S rRNA nuclease, found in Chlamydia pneumoniae (Chlamydophila pneumoniae).